The sequence spans 456 residues: MFS-type transporter ppzB (456 aa).

A run of 5 helical transmembrane segments spans residues M1–M21, G38–A58, V72–V92, I125–V145, and A154–I174. Residues E206–D225 form a disordered region. 6 helical membrane passes run L255–P275, F284–G304, A318–E338, V348–P368, F398–V418, and V427–V447.

This sequence belongs to the major facilitator superfamily. TCR/Tet family.

It is found in the membrane. In terms of biological role, MFS-type transporter; part of the gene cluster that mediates the biosynthesis of pyrrolopyrazines, secondary metabolites showing insecticidal activity. Probably involved in the secretion of peramine and other pyrrolopyrazines. This is MFS-type transporter ppzB (ppzB) from Metarhizium majus (strain ARSEF 297).